Reading from the N-terminus, the 494-residue chain is 4-trimethylaminobutyraldehyde dehydrogenase (494 aa).

S2 carries the post-translational modification N-acetylserine. K30 is modified (N6-acetyllysine; alternate). At K30 the chain carries N6-succinyllysine; alternate. K59 carries the N6-succinyllysine modification. NAD(+) is bound by residues K180 and 232–236; that span reads GSVPT. The Proton acceptor role is filled by E254. C288 serves as the catalytic Nucleophile. At K298 the chain carries N6-acetyllysine. K303 carries the N6-acetyllysine; alternate modification. K303 bears the N6-succinyllysine; alternate mark. N6-acetyllysine is present on K344. An NAD(+)-binding site is contributed by E391.

It belongs to the aldehyde dehydrogenase family. Homotetramer.

The protein localises to the cytoplasm. Its subcellular location is the cytosol. The catalysed reaction is 4-(trimethylamino)butanal + NAD(+) + H2O = 4-(trimethylamino)butanoate + NADH + 2 H(+). It carries out the reaction an aldehyde + NAD(+) + H2O = a carboxylate + NADH + 2 H(+). The enzyme catalyses 4-aminobutanal + NAD(+) + H2O = 4-aminobutanoate + NADH + 2 H(+). It catalyses the reaction formaldehyde + NAD(+) + H2O = formate + NADH + 2 H(+). The catalysed reaction is acetaldehyde + NAD(+) + H2O = acetate + NADH + 2 H(+). It carries out the reaction imidazole-4-acetaldehyde + NAD(+) + H2O = imidazole-4-acetate + NADH + 2 H(+). The enzyme catalyses acrolein + NAD(+) + H2O = acrylate + NADH + 2 H(+). It catalyses the reaction (5-hydroxyindol-3-yl)acetaldehyde + NAD(+) + H2O = (5-hydroxyindol-3-yl)acetate + NADH + 2 H(+). The catalysed reaction is 3,4-dihydroxyphenylacetaldehyde + NAD(+) + H2O = 3,4-dihydroxyphenylacetate + NADH + 2 H(+). It carries out the reaction spermine monoaldehyde + NAD(+) + H2O = N-(2-carboxyethyl)spermidine + NADH + 2 H(+). The enzyme catalyses propanal + NAD(+) + H2O = propanoate + NADH + 2 H(+). It catalyses the reaction butanal + NAD(+) + H2O = butanoate + NADH + 2 H(+). The catalysed reaction is pentanal + NAD(+) + H2O = pentanoate + NADH + 2 H(+). It carries out the reaction hexanal + NAD(+) + H2O = hexanoate + NADH + 2 H(+). Its pathway is amine and polyamine biosynthesis; carnitine biosynthesis. In terms of biological role, converts gamma-trimethylaminobutyraldehyde into gamma-butyrobetaine with high efficiency (in vitro). Can catalyze the irreversible oxidation of a broad range of aldehydes to the corresponding acids in an NAD-dependent reaction, but with low efficiency. Catalyzes the oxidation of aldehydes arising from biogenic amines and polyamines. This Pongo abelii (Sumatran orangutan) protein is 4-trimethylaminobutyraldehyde dehydrogenase (ALDH9A1).